The sequence spans 574 residues: MSCPIHPRRLFLCLLISLTFFVVDPSSQHIEVKKKQMREKVREMFYHAYDNYMTYAFPHDELKPLTKSFTDSLSELGNLKLEHLPTDYNGSAVTLVESLSSLAILGNSTEFEKGVLWLSENLTFDIDARVNLFECNIRVLGGLISAHLLAIDPNNRLIQGSYNNQLLRLAEDLGKRFLPAFETPTGLPYAWINLKNGVMENETTETSTSGCGSLVLEMGALSRLTGDPRFESAALRALRQLWRMRSSLDLLGTTLDVVTGEWIEYSSSIGAGVDSFYEYLLKAYILFGKEDYWRMFHSAYLASQKYFRHGPWYHEANMWSGKPTYWQLTSLQAFWPGLQVLVGDIAAANSSHREFFHVWEKFGVLPERYLLDHQIIHPTMKYYPLRPELAESTFYLYQATKDPWYLDVGESMVKSLNLYTKVPGGFASVRDVTTMQLEDHQHSFFLAETCKYLYLLFDDSFVAKRNYIFTTEGHPIQVVSSWHEKLPETYFSGNWTLSKSGAWESRASALSLQVCPLISLNSRHPEQQRESACHVLDEQINHKCWSNKECGVDATTCRLRTCSGVGYCGLWNPL.

Over 1–9 (MSCPIHPRR) the chain is Cytoplasmic. Residues 10-26 (LFLCLLISLTFFVVDPS) form a helical; Signal-anchor for type II membrane protein membrane-spanning segment. Residues 27-574 (SQHIEVKKKQ…VGYCGLWNPL (548 aa)) lie on the Lumenal side of the membrane. 3 N-linked (GlcNAc...) asparagine glycosylation sites follow: asparagine 89, asparagine 107, and asparagine 121. The active-site Proton donor is the glutamate 134. An N-linked (GlcNAc...) asparagine glycan is attached at asparagine 201. The active site involves aspartate 274. N-linked (GlcNAc...) asparagine glycosylation occurs at asparagine 349. The active-site Proton donor is the glutamate 367. Residue glutamate 388 is part of the active site. Residue threonine 471 participates in Ca(2+) binding. Residue asparagine 494 is glycosylated (N-linked (GlcNAc...) asparagine).

It belongs to the glycosyl hydrolase 47 family. Requires Ca(2+) as cofactor.

It localises to the endoplasmic reticulum membrane. Its pathway is protein modification; protein glycosylation. Can convert Man(9)GlcNAc(2) and Man(8)GlcNAc(2) into N-glycans with a terminal alpha-1,6-linked Man residue in the C-branch. Functions in the formation of unique N-glycan structures that are specifically recognized by components of the endoplasmic reticulum-associated degradation (ERAD) machinery, which leads to the degradation of misfolded glycoproteins. Most likely generates N-glycan signal on misfolded glycoproteins that is subsequently recognized by OS9. Required for ERAD of the heavily glycosylated and misfolded BRI1 variants BRI1-5 and BRI1-9. Does not seem to play role in N-glycan processing of correctly folded proteins destined for secretion. This chain is Alpha-mannosidase I MNS5 (MNS5), found in Arabidopsis thaliana (Mouse-ear cress).